A 302-amino-acid polypeptide reads, in one-letter code: Recombination-associated protein RdgC (302 aa).

It belongs to the RdgC family.

It is found in the cytoplasm. The protein resides in the nucleoid. Functionally, may be involved in recombination. The protein is Recombination-associated protein RdgC of Halorhodospira halophila (strain DSM 244 / SL1) (Ectothiorhodospira halophila (strain DSM 244 / SL1)).